Here is a 167-residue protein sequence, read N- to C-terminus: Biogenesis of lysosome-related organelles complex 1 subunit 6 (167 aa).

Positions 1-11 (MLKSSNINSVL) are enriched in polar residues. The disordered stretch occupies residues 1–38 (MLKSSNINSVLNELPNDPARDSTAQSSHNGKPKQDAET). The stretch at 102–160 (ARLNDMMSDVKRYKDKLTKIKKEMQGVYQRTKELKKRAANVAACKQRDYQRKLERLQHE) forms a coiled coil.

It belongs to the BLOC1S6 family. As to quaternary structure, component of the biogenesis of lysosome-related organelles complex-1 (BLOC-1) composed of Blos1, Blos2, Blos3, Blos4, Dysb, Muted, Pldn and Snapin. Interacts with Blos1, Blos4 and Dysb.

The protein resides in the synapse. The protein localises to the cytoplasm. It is found in the cytoskeleton. Its subcellular location is the myofibril. It localises to the sarcomere. The protein resides in the z line. Functionally, component of the biogenesis of lysosome-related organelles complex-1 (BLOC-1) involved in pigment granule biogenesis and membrane trafficking in synapses. In response to high synaptic activity at neuromuscular junctions, plays a key role in promoting efficient synaptic vesicle recycling and re-formation through early endosomes. This is Biogenesis of lysosome-related organelles complex 1 subunit 6 from Drosophila melanogaster (Fruit fly).